We begin with the raw amino-acid sequence, 74 residues long: Delta-actitoxin-Amc3a (74 aa).

Residues 1-19 (MNRLIILVVAAVFLGMASA) form the signal peptide. Residues 20-24 (EEDVL) constitute a propeptide that is removed on maturation. Residue Pro-29 is modified to Hydroxyproline. Disulfide bonds link Cys-30-Cys-70, Cys-32-Cys-60, and Cys-53-Cys-71. The residue at position 73 (Gln-73) is a Glutamine amide.

Belongs to the sea anemone sodium channel inhibitory toxin family. Type I subfamily.

Its subcellular location is the secreted. The protein resides in the nematocyst. In terms of biological role, inhibits voltage-gated sodium channels (Nav). In Antheopsis maculata (Sea anemone), this protein is Delta-actitoxin-Amc3a.